The sequence spans 336 residues: Anthranilate phosphoribosyltransferase (336 aa).

5-phospho-alpha-D-ribose 1-diphosphate is bound by residues glycine 82, 85–86, threonine 90, 92–95, 110–118, and serine 122; these read GD, NIST, and KHGNRFASG. Glycine 82 is an anthranilate binding site. Serine 94 contacts Mg(2+). Asparagine 113 is a binding site for anthranilate. Residue arginine 168 coordinates anthranilate. Residues aspartate 227 and glutamate 228 each contribute to the Mg(2+) site.

The protein belongs to the anthranilate phosphoribosyltransferase family. Homodimer. Mg(2+) serves as cofactor.

The catalysed reaction is N-(5-phospho-beta-D-ribosyl)anthranilate + diphosphate = 5-phospho-alpha-D-ribose 1-diphosphate + anthranilate. It functions in the pathway amino-acid biosynthesis; L-tryptophan biosynthesis; L-tryptophan from chorismate: step 2/5. Its function is as follows. Catalyzes the transfer of the phosphoribosyl group of 5-phosphorylribose-1-pyrophosphate (PRPP) to anthranilate to yield N-(5'-phosphoribosyl)-anthranilate (PRA). In Desulfitobacterium hafniense (strain Y51), this protein is Anthranilate phosphoribosyltransferase.